Consider the following 430-residue polypeptide: Serine--tRNA ligase (430 aa).

Residue 237-239 (TAE) participates in L-serine binding. Position 268-270 (268-270 (RSE)) interacts with ATP. Glutamate 291 provides a ligand contact to L-serine. 355 to 358 (EISS) lines the ATP pocket. Serine 391 lines the L-serine pocket.

Belongs to the class-II aminoacyl-tRNA synthetase family. Type-1 seryl-tRNA synthetase subfamily. In terms of assembly, homodimer. The tRNA molecule binds across the dimer.

The protein resides in the cytoplasm. The catalysed reaction is tRNA(Ser) + L-serine + ATP = L-seryl-tRNA(Ser) + AMP + diphosphate + H(+). The enzyme catalyses tRNA(Sec) + L-serine + ATP = L-seryl-tRNA(Sec) + AMP + diphosphate + H(+). Its pathway is aminoacyl-tRNA biosynthesis; selenocysteinyl-tRNA(Sec) biosynthesis; L-seryl-tRNA(Sec) from L-serine and tRNA(Sec): step 1/1. Its function is as follows. Catalyzes the attachment of serine to tRNA(Ser). Is also able to aminoacylate tRNA(Sec) with serine, to form the misacylated tRNA L-seryl-tRNA(Sec), which will be further converted into selenocysteinyl-tRNA(Sec). This chain is Serine--tRNA ligase, found in Salmonella paratyphi C (strain RKS4594).